Consider the following 149-residue polypeptide: Arginine repressor (149 aa).

The protein belongs to the ArgR family.

It is found in the cytoplasm. It participates in amino-acid biosynthesis; L-arginine biosynthesis [regulation]. In terms of biological role, regulates arginine biosynthesis genes. This chain is Arginine repressor, found in Bacillus pumilus (strain SAFR-032).